The primary structure comprises 250 residues: Hydroxyacylglutathione hydrolase (250 aa).

Zn(2+) contacts are provided by H52, H54, D56, H57, H107, D128, and H166.

It belongs to the metallo-beta-lactamase superfamily. Glyoxalase II family. Monomer. Zn(2+) serves as cofactor.

It catalyses the reaction an S-(2-hydroxyacyl)glutathione + H2O = a 2-hydroxy carboxylate + glutathione + H(+). It participates in secondary metabolite metabolism; methylglyoxal degradation; (R)-lactate from methylglyoxal: step 2/2. Functionally, thiolesterase that catalyzes the hydrolysis of S-D-lactoyl-glutathione to form glutathione and D-lactic acid. The chain is Hydroxyacylglutathione hydrolase from Neisseria meningitidis serogroup A / serotype 4A (strain DSM 15465 / Z2491).